Consider the following 204-residue polypeptide: Isochorismatase domain-containing protein 2 (204 aa).

This sequence belongs to the isochorismatase family. As to quaternary structure, interacts with CDKN2A.

The protein resides in the cytoplasm. The protein localises to the nucleus. The protein is Isochorismatase domain-containing protein 2 (ISOC2) of Bos taurus (Bovine).